The following is an 824-amino-acid chain: Vesicle-fusing ATPase (824 aa).

ATP contacts are provided by residues 582–587 (RGMIVW) and 622–629 (AKTGKTSL). T627 lines the Mg(2+) pocket.

Belongs to the AAA ATPase family. As to quaternary structure, homohexamer. Mg(2+) serves as cofactor.

Its subcellular location is the cytoplasm. The catalysed reaction is ATP + H2O = ADP + phosphate + H(+). Its function is as follows. Required for vesicle-mediated transport. Catalyzes the fusion of transport vesicles within the Golgi cisternae. Is also required for transport from the endoplasmic reticulum to the Golgi stack. Seems to function as a fusion protein required for the delivery of cargo proteins to all compartments of the Golgi stack independent of vesicle origin. In Caenorhabditis elegans, this protein is Vesicle-fusing ATPase (nsf-1).